A 213-amino-acid polypeptide reads, in one-letter code: Probable chemoreceptor glutamine deamidase CheD (213 aa).

A compositionally biased stretch (basic residues) spans Met1–Lys12. The interval Met1–Arg25 is disordered.

The protein belongs to the CheD family.

It carries out the reaction L-glutaminyl-[protein] + H2O = L-glutamyl-[protein] + NH4(+). Functionally, probably deamidates glutamine residues to glutamate on methyl-accepting chemotaxis receptors (MCPs), playing an important role in chemotaxis. The polypeptide is Probable chemoreceptor glutamine deamidase CheD (Rhodopseudomonas palustris (strain BisA53)).